Reading from the N-terminus, the 222-residue chain is 4'-phosphopantetheinyl transferase Npt (222 aa).

Positions 105, 107, and 147 each coordinate Mg(2+).

The protein belongs to the P-Pant transferase superfamily. In terms of assembly, monomer. The cofactor is Mg(2+).

The enzyme catalyses apo-[ACP] + CoA = holo-[ACP] + adenosine 3',5'-bisphosphate + H(+). Its function is as follows. Catalyzes the transfer of the 4'-phosphopantetheine moiety from coenzyme A to a serine residue in the acyl-carrier domain of carboxylic acid reductase Car, thus converting apo-Car to fully active holo-Car. Is probably also responsible for the activation of other proteins with phosphopantetheine attachment sites. The chain is 4'-phosphopantetheinyl transferase Npt (npt) from Nocardia iowensis.